Consider the following 166-residue polypeptide: UPF0336 protein ML1908 (166 aa).

Belongs to the UPF0336 family.

The protein is UPF0336 protein ML1908 of Mycobacterium leprae (strain TN).